The chain runs to 461 residues: Mycosin-3 (461 aa).

The first 25 residues, Met1–Ala25, serve as a signal peptide directing secretion. Residues Asp64–Leu397 form the Peptidase S8 domain. Active-site charge relay system residues include Asp95, His126, and Ser342. A helical transmembrane segment spans residues Ala432–Ile452.

The protein belongs to the peptidase S8 family.

Its subcellular location is the cell membrane. The sequence is that of Mycosin-3 from Mycobacterium tuberculosis (strain ATCC 25618 / H37Rv).